The following is a 158-amino-acid chain: Acireductone dioxygenase (158 aa).

Residues H81, H83, E87, and H126 each contribute to the Fe(2+) site. Positions 81, 83, 87, and 126 each coordinate Ni(2+).

Belongs to the acireductone dioxygenase (ARD) family. Requires Fe(2+) as cofactor. It depends on Ni(2+) as a cofactor.

It localises to the cytoplasm. The protein resides in the nucleus. The enzyme catalyses 1,2-dihydroxy-5-(methylsulfanyl)pent-1-en-3-one + O2 = 4-methylsulfanyl-2-oxobutanoate + formate + 2 H(+). It catalyses the reaction 1,2-dihydroxy-5-(methylsulfanyl)pent-1-en-3-one + O2 = 3-(methylsulfanyl)propanoate + CO + formate + 2 H(+). The protein operates within amino-acid biosynthesis; L-methionine biosynthesis via salvage pathway; L-methionine from S-methyl-5-thio-alpha-D-ribose 1-phosphate: step 5/6. Catalyzes 2 different reactions between oxygen and the acireductone 1,2-dihydroxy-3-keto-5-methylthiopentene (DHK-MTPene) depending upon the metal bound in the active site. Fe-containing acireductone dioxygenase (Fe-ARD) produces formate and 2-keto-4-methylthiobutyrate (KMTB), the alpha-ketoacid precursor of methionine in the methionine recycle pathway. Ni-containing acireductone dioxygenase (Ni-ARD) produces methylthiopropionate, carbon monoxide and formate, and does not lie on the methionine recycle pathway. The sequence is that of Acireductone dioxygenase from Metarhizium robertsii (strain ARSEF 23 / ATCC MYA-3075) (Metarhizium anisopliae (strain ARSEF 23)).